The primary structure comprises 836 residues: Translation initiation factor IF-2 (836 aa).

Basic residues predominate over residues methionine 1–lysine 17. Disordered stretches follow at residues methionine 1–lysine 43 and alanine 83–alanine 240. The segment covering threonine 18–glycine 27 has biased composition (low complexity). Over residues alanine 83 to glutamate 153 the composition is skewed to basic and acidic residues. Residues alanine 154 to serine 167 are compositionally biased toward acidic residues. A compositionally biased stretch (basic residues) spans arginine 192–lysine 202. The span at glycine 203–phenylalanine 229 shows a compositional bias: basic and acidic residues. The tr-type G domain occupies threonine 335–threonine 505. The interval glycine 344–threonine 351 is G1. Glycine 344–threonine 351 is a GTP binding site. The G2 stretch occupies residues glycine 369 to histidine 373. A G3 region spans residues aspartate 391–glycine 394. GTP is bound by residues aspartate 391 to histidine 395 and asparagine 445 to aspartate 448. Positions asparagine 445–aspartate 448 are G4. A G5 region spans residues serine 481–lysine 483.

Belongs to the TRAFAC class translation factor GTPase superfamily. Classic translation factor GTPase family. IF-2 subfamily.

The protein localises to the cytoplasm. Its function is as follows. One of the essential components for the initiation of protein synthesis. Protects formylmethionyl-tRNA from spontaneous hydrolysis and promotes its binding to the 30S ribosomal subunits. Also involved in the hydrolysis of GTP during the formation of the 70S ribosomal complex. This Haemophilus influenzae (strain PittEE) protein is Translation initiation factor IF-2.